Reading from the N-terminus, the 314-residue chain is Bis(5'-nucleosyl)-tetraphosphatase, symmetrical (314 aa).

Residues glutamine 267–glycine 314 are disordered. Low complexity predominate over residues glutamine 297 to glycine 314.

The protein belongs to the Ap4A hydrolase family.

It carries out the reaction P(1),P(4)-bis(5'-adenosyl) tetraphosphate + H2O = 2 ADP + 2 H(+). Its function is as follows. Hydrolyzes diadenosine 5',5'''-P1,P4-tetraphosphate to yield ADP. This is Bis(5'-nucleosyl)-tetraphosphatase, symmetrical from Xanthomonas axonopodis pv. citri (strain 306).